The chain runs to 316 residues: protein SLOW GREEN 1, chloroplastic (316 aa).

The N-terminal 39 residues, methionine 1–arginine 39, are a transit peptide targeting the chloroplast. 4 TPR repeats span residues valine 118 to glutamate 151, threonine 152 to serine 185, arginine 226 to aspartate 259, and arginine 261 to lysine 293.

As to expression, ubiquitous. Preferentially expressed in newly formed green tissues.

The protein localises to the plastid. The protein resides in the chloroplast. Its function is as follows. Required for the early stage of chloroplast development. May be involved in chloroplast protein biosynthesis and/or degradation. The chain is protein SLOW GREEN 1, chloroplastic from Arabidopsis thaliana (Mouse-ear cress).